We begin with the raw amino-acid sequence, 447 residues long: N-succinylarginine dihydrolase (447 aa).

Residues 19 to 28 (AGLSFGNEAS), Asn-110, and 137 to 138 (HR) contribute to the substrate site. Glu-174 is an active-site residue. Residue Arg-214 coordinates substrate. His-250 is a catalytic residue. 2 residues coordinate substrate: Asp-252 and Asn-365. The active-site Nucleophile is Cys-371.

It belongs to the succinylarginine dihydrolase family. As to quaternary structure, homodimer.

It catalyses the reaction N(2)-succinyl-L-arginine + 2 H2O + 2 H(+) = N(2)-succinyl-L-ornithine + 2 NH4(+) + CO2. Its pathway is amino-acid degradation; L-arginine degradation via AST pathway; L-glutamate and succinate from L-arginine: step 2/5. Catalyzes the hydrolysis of N(2)-succinylarginine into N(2)-succinylornithine, ammonia and CO(2). The protein is N-succinylarginine dihydrolase of Acinetobacter baumannii (strain ATCC 17978 / DSM 105126 / CIP 53.77 / LMG 1025 / NCDC KC755 / 5377).